Reading from the N-terminus, the 153-residue chain is NADH dehydrogenase [ubiquinone] 1 beta subcomplex subunit 11, mitochondrial (153 aa).

The N-terminal 29 residues, M1–W29, are a transit peptide targeting the mitochondrion. The disordered stretch occupies residues P40 to D77. Basic and acidic residues predominate over residues L66–D77. Residues L89–L109 form a helical membrane-spanning segment.

Belongs to the complex I NDUFB11 subunit family. Complex I is composed of 45 different subunits. Interacts with BCAP31.

The protein resides in the mitochondrion inner membrane. In terms of biological role, accessory subunit of the mitochondrial membrane respiratory chain NADH dehydrogenase (Complex I), that is believed not to be involved in catalysis. Complex I functions in the transfer of electrons from NADH to the respiratory chain. The immediate electron acceptor for the enzyme is believed to be ubiquinone. The sequence is that of NADH dehydrogenase [ubiquinone] 1 beta subcomplex subunit 11, mitochondrial (NDUFB11) from Pan troglodytes (Chimpanzee).